A 412-amino-acid chain; its full sequence is Arginine biosynthesis bifunctional protein ArgJ (412 aa).

Substrate-binding residues include Thr162, Lys188, Thr199, Glu285, Asn407, and Thr412. The Nucleophile role is filled by Thr199.

It belongs to the ArgJ family. As to quaternary structure, heterotetramer of two alpha and two beta chains.

Its subcellular location is the cytoplasm. The enzyme catalyses N(2)-acetyl-L-ornithine + L-glutamate = N-acetyl-L-glutamate + L-ornithine. It catalyses the reaction L-glutamate + acetyl-CoA = N-acetyl-L-glutamate + CoA + H(+). Its pathway is amino-acid biosynthesis; L-arginine biosynthesis; L-ornithine and N-acetyl-L-glutamate from L-glutamate and N(2)-acetyl-L-ornithine (cyclic): step 1/1. The protein operates within amino-acid biosynthesis; L-arginine biosynthesis; N(2)-acetyl-L-ornithine from L-glutamate: step 1/4. Catalyzes two activities which are involved in the cyclic version of arginine biosynthesis: the synthesis of N-acetylglutamate from glutamate and acetyl-CoA as the acetyl donor, and of ornithine by transacetylation between N(2)-acetylornithine and glutamate. This is Arginine biosynthesis bifunctional protein ArgJ from Staphylococcus saprophyticus subsp. saprophyticus (strain ATCC 15305 / DSM 20229 / NCIMB 8711 / NCTC 7292 / S-41).